The chain runs to 471 residues: MTDLPDSTRWQLWIVAFGFFMQSLDTTIVNTALPSMAQSLGESPLHMHMVIVSYVLTVAVMLPASGWLADKVGVRNIFFTAIVLFTLGSLFCALSGTLNELLLARALQGVGGAMMVPVGRLTVMKIVPREQYMAAMTFVTLPGQVGPLLGPALGGLLVEYASWHWIFLINIPVGIIGAIATLMLMPNYTMQTRRFDLSGFLLLAVGMAVLTLALDGSKGTGFSPLAIAGLVAVGVVALVLYLLHAQNNNRALFSLKLFRTRNFSLGLAGSFAGRIGSGMLPFMTPVFLQIGLGFSPFHAGLMMIPMVLGSMGMKRIVVQVVNRFGYRRVLVATTLGLSLVTLLFMTTALLGWYYVLPFVLFLQGMVNSTRFSSMNTLTLKDLPDNLASSGNSLLSMIMQLSMSIGVTIAGLLLGLFGSQHVSVDSGTTQTVFMYTWLSMAFIIALPAFVFARVPSDTHQNVAISRRKRSAQ.

Residues 1–11 lie on the Periplasmic side of the membrane; the sequence is MTDLPDSTRWQ. A helical transmembrane segment spans residues 12–32; the sequence is LWIVAFGFFMQSLDTTIVNTA. Over 33–48 the chain is Cytoplasmic; the sequence is LPSMAQSLGESPLHMH. A helical transmembrane segment spans residues 49-69; sequence MVIVSYVLTVAVMLPASGWLA. At 70-76 the chain is on the periplasmic side; it reads DKVGVRN. The chain crosses the membrane as a helical span at residues 77 to 97; it reads IFFTAIVLFTLGSLFCALSGT. The Cytoplasmic segment spans residues 98–101; the sequence is LNEL. The chain crosses the membrane as a helical span at residues 102 to 124; sequence LLARALQGVGGAMMVPVGRLTVM. The Periplasmic portion of the chain corresponds to 125–137; that stretch reads KIVPREQYMAAMT. The helical transmembrane segment at 138–158 threads the bilayer; sequence FVTLPGQVGPLLGPALGGLLV. Residues 159–164 lie on the Cytoplasmic side of the membrane; it reads EYASWH. The chain crosses the membrane as a helical span at residues 165–185; sequence WIFLINIPVGIIGAIATLMLM. The Periplasmic portion of the chain corresponds to 186–196; sequence PNYTMQTRRFD. Residues 197-217 form a helical membrane-spanning segment; that stretch reads LSGFLLLAVGMAVLTLALDGS. Residues 218-224 lie on the Cytoplasmic side of the membrane; sequence KGTGFSP. Residues 225-245 form a helical membrane-spanning segment; sequence LAIAGLVAVGVVALVLYLLHA. Topologically, residues 246 to 262 are periplasmic; sequence QNNNRALFSLKLFRTRN. The chain crosses the membrane as a helical span at residues 263-283; the sequence is FSLGLAGSFAGRIGSGMLPFM. At 284-285 the chain is on the cytoplasmic side; sequence TP. A helical transmembrane segment spans residues 286-306; the sequence is VFLQIGLGFSPFHAGLMMIPM. The Periplasmic portion of the chain corresponds to 307 to 341; that stretch reads VLGSMGMKRIVVQVVNRFGYRRVLVATTLGLSLVT. The helical transmembrane segment at 342 to 362 threads the bilayer; sequence LLFMTTALLGWYYVLPFVLFL. The Cytoplasmic segment spans residues 363–395; the sequence is QGMVNSTRFSSMNTLTLKDLPDNLASSGNSLLS. The helical transmembrane segment at 396–416 threads the bilayer; the sequence is MIMQLSMSIGVTIAGLLLGLF. At 417 to 430 the chain is on the periplasmic side; that stretch reads GSQHVSVDSGTTQT. A helical membrane pass occupies residues 431 to 451; the sequence is VFMYTWLSMAFIIALPAFVFA. At 452 to 471 the chain is on the cytoplasmic side; the sequence is RVPSDTHQNVAISRRKRSAQ.

It belongs to the major facilitator superfamily. TCR/Tet family.

Its subcellular location is the cell inner membrane. The chain is Putative multidrug resistance protein MdtD from Escherichia coli O1:K1 / APEC.